A 350-amino-acid chain; its full sequence is Phenylalanine--tRNA ligase alpha subunit (350 aa).

Glutamate 271 is a Mg(2+) binding site.

Belongs to the class-II aminoacyl-tRNA synthetase family. Phe-tRNA synthetase alpha subunit type 1 subfamily. In terms of assembly, tetramer of two alpha and two beta subunits. Requires Mg(2+) as cofactor.

It is found in the cytoplasm. It catalyses the reaction tRNA(Phe) + L-phenylalanine + ATP = L-phenylalanyl-tRNA(Phe) + AMP + diphosphate + H(+). The polypeptide is Phenylalanine--tRNA ligase alpha subunit (Acidovorax ebreus (strain TPSY) (Diaphorobacter sp. (strain TPSY))).